The chain runs to 185 residues: MISVTELRNGTKVEMDGGLWECLEYSHLKMGRGGAKVVTKFRNMETGSIVDRTFNSGEKLQDIYVEGKKMQYLYRDGDDYVFMDMETFDQVHLPPALVGDTAKFMKENTEVEVAMYGDKALSITLPNQVILKIVQTDPGVRGDTVSGGTKPATLETGAVVQVPLFVEQGTDVKVDTRTGQYLSRA.

It belongs to the elongation factor P family.

The protein resides in the cytoplasm. It participates in protein biosynthesis; polypeptide chain elongation. Its function is as follows. Involved in peptide bond synthesis. Stimulates efficient translation and peptide-bond synthesis on native or reconstituted 70S ribosomes in vitro. Probably functions indirectly by altering the affinity of the ribosome for aminoacyl-tRNA, thus increasing their reactivity as acceptors for peptidyl transferase. This is Elongation factor P from Deinococcus geothermalis (strain DSM 11300 / CIP 105573 / AG-3a).